We begin with the raw amino-acid sequence, 285 residues long: Bifunctional protein FolD (285 aa).

Residues 165–167 (GRS) and Ser190 contribute to the NADP(+) site.

Belongs to the tetrahydrofolate dehydrogenase/cyclohydrolase family. Homodimer.

It catalyses the reaction (6R)-5,10-methylene-5,6,7,8-tetrahydrofolate + NADP(+) = (6R)-5,10-methenyltetrahydrofolate + NADPH. The catalysed reaction is (6R)-5,10-methenyltetrahydrofolate + H2O = (6R)-10-formyltetrahydrofolate + H(+). Its pathway is one-carbon metabolism; tetrahydrofolate interconversion. In terms of biological role, catalyzes the oxidation of 5,10-methylenetetrahydrofolate to 5,10-methenyltetrahydrofolate and then the hydrolysis of 5,10-methenyltetrahydrofolate to 10-formyltetrahydrofolate. The protein is Bifunctional protein FolD of Streptococcus pneumoniae (strain ATCC BAA-255 / R6).